A 384-amino-acid polypeptide reads, in one-letter code: Branched-chain-amino-acid aminotransferase 1, mitochondrial (384 aa).

A mitochondrion-targeting transit peptide spans 1–18; it reads MALRRCLPQYSTTSSYLS. At lysine 231 the chain carries N6-(pyridoxal phosphate)lysine.

The protein belongs to the class-IV pyridoxal-phosphate-dependent aminotransferase family. Pyridoxal 5'-phosphate is required as a cofactor.

It localises to the mitochondrion. The enzyme catalyses L-leucine + 2-oxoglutarate = 4-methyl-2-oxopentanoate + L-glutamate. The catalysed reaction is L-isoleucine + 2-oxoglutarate = (S)-3-methyl-2-oxopentanoate + L-glutamate. It carries out the reaction L-valine + 2-oxoglutarate = 3-methyl-2-oxobutanoate + L-glutamate. The protein operates within amino-acid degradation; L-leucine degradation; 4-methyl-2-oxopentanoate from L-leucine (aminotransferase route): step 1/1. Its pathway is amino-acid degradation; L-valine degradation. Converts 2-oxo acids to branched-chain amino acids. Acts on leucine, isoleucine and valine. The chain is Branched-chain-amino-acid aminotransferase 1, mitochondrial (BCAT1) from Arabidopsis thaliana (Mouse-ear cress).